The following is a 362-amino-acid chain: 3-dehydroquinate synthase (362 aa).

NAD(+) contacts are provided by residues 71 to 76 (DGEKYK), 105 to 109 (GVIGD), 129 to 130 (TT), lysine 142, lysine 151, and 169 to 172 (CLKT). Residues glutamate 184, histidine 247, and histidine 264 each coordinate Zn(2+).

This sequence belongs to the sugar phosphate cyclases superfamily. Dehydroquinate synthase family. The cofactor is Co(2+). Zn(2+) is required as a cofactor. NAD(+) serves as cofactor.

The protein resides in the cytoplasm. It carries out the reaction 7-phospho-2-dehydro-3-deoxy-D-arabino-heptonate = 3-dehydroquinate + phosphate. Its pathway is metabolic intermediate biosynthesis; chorismate biosynthesis; chorismate from D-erythrose 4-phosphate and phosphoenolpyruvate: step 2/7. Functionally, catalyzes the conversion of 3-deoxy-D-arabino-heptulosonate 7-phosphate (DAHP) to dehydroquinate (DHQ). This is 3-dehydroquinate synthase from Citrobacter koseri (strain ATCC BAA-895 / CDC 4225-83 / SGSC4696).